The following is a 121-amino-acid chain: Acidic phospholipase A2 PLA-2 (121 aa).

Cystine bridges form between cysteine 26–cysteine 115, cysteine 28–cysteine 44, cysteine 43–cysteine 95, cysteine 49–cysteine 121, cysteine 50–cysteine 88, cysteine 57–cysteine 81, and cysteine 75–cysteine 86. Residues tyrosine 27, glycine 29, and glycine 31 each contribute to the Ca(2+) site. Histidine 47 is an active-site residue. Aspartate 48 provides a ligand contact to Ca(2+). The active site involves aspartate 89.

Belongs to the phospholipase A2 family. Group II subfamily. D49 sub-subfamily. It depends on Ca(2+) as a cofactor. As to expression, expressed by the venom gland.

The protein resides in the secreted. It catalyses the reaction a 1,2-diacyl-sn-glycero-3-phosphocholine + H2O = a 1-acyl-sn-glycero-3-phosphocholine + a fatty acid + H(+). In terms of biological role, PLA2 catalyzes the calcium-dependent hydrolysis of the 2-acyl groups in 3-sn-phosphoglycerides. In Eristicophis macmahoni (Leaf-nosed viper), this protein is Acidic phospholipase A2 PLA-2.